A 101-amino-acid chain; its full sequence is NAD(P)H-quinone oxidoreductase subunit 4L, chloroplastic (101 aa).

Helical transmembrane passes span Ile2–Ile22, Met32–Phe52, and Ile61–Val81.

The protein belongs to the complex I subunit 4L family. In terms of assembly, NDH is composed of at least 16 different subunits, 5 of which are encoded in the nucleus.

The protein resides in the plastid. It is found in the chloroplast thylakoid membrane. The catalysed reaction is a plastoquinone + NADH + (n+1) H(+)(in) = a plastoquinol + NAD(+) + n H(+)(out). The enzyme catalyses a plastoquinone + NADPH + (n+1) H(+)(in) = a plastoquinol + NADP(+) + n H(+)(out). Functionally, NDH shuttles electrons from NAD(P)H:plastoquinone, via FMN and iron-sulfur (Fe-S) centers, to quinones in the photosynthetic chain and possibly in a chloroplast respiratory chain. The immediate electron acceptor for the enzyme in this species is believed to be plastoquinone. Couples the redox reaction to proton translocation, and thus conserves the redox energy in a proton gradient. This Phaseolus vulgaris (Kidney bean) protein is NAD(P)H-quinone oxidoreductase subunit 4L, chloroplastic.